The following is a 33-amino-acid chain: Brevinin-2PTd (33 aa).

Cys-27 and Cys-33 are disulfide-bonded.

As to expression, expressed by the skin glands.

It localises to the secreted. In terms of biological role, has antibacterial activity against the Gram-positive bacterium S.aureus ATCC 25923 and the Gram-negative bacterium E.coli ATCC 25726. This Pulchrana picturata (Malaysian fire frog) protein is Brevinin-2PTd.